A 611-amino-acid chain; its full sequence is UPF0508 protein SCY_3114 (611 aa).

The protein belongs to the UPF0508 family.

This chain is UPF0508 protein SCY_3114, found in Saccharomyces cerevisiae (strain YJM789) (Baker's yeast).